Reading from the N-terminus, the 394-residue chain is Sugar efflux transporter C (394 aa).

The Periplasmic portion of the chain corresponds to 1-10; the sequence is MQKTATTPSK. A helical transmembrane segment spans residues 11-31; it reads ILDLTAAAFLLVAFLTGIAGA. Residues 32–49 lie on the Cytoplasmic side of the membrane; sequence LQTPTLSIFLADELKARP. The chain crosses the membrane as a helical span at residues 50-70; that stretch reads IMVGFFFTGSAIMGILVSQFL. Topologically, residues 71–80 are periplasmic; sequence ARHSDKQGDR. The chain crosses the membrane as a helical span at residues 81 to 101; sequence KLLILLCCLFGVLACTLFAWN. Residues 102–104 lie on the Cytoplasmic side of the membrane; it reads RNY. Residues 105 to 125 traverse the membrane as a helical segment; it reads FILLSTGVLLSSFASTANPQM. At 126-150 the chain is on the periplasmic side; it reads FALAREHADRTGRETVMFSTFLRAQ. Residues 151–171 form a helical membrane-spanning segment; the sequence is ISLAWVIGPPLAYELAMGFSF. A topological domain (cytoplasmic) is located at residue Lys172. The helical transmembrane segment at 173–193 threads the bilayer; the sequence is VMYLTAAIAFVVCGLIVWLFL. At 194–224 the chain is on the periplasmic side; that stretch reads PSIQRNIPVVTQPVEILPSTHRKRDTRLLFV. The helical transmembrane segment at 225–245 threads the bilayer; that stretch reads VCSMMWAANNLYMINMPLFII. The Cytoplasmic portion of the chain corresponds to 246 to 253; sequence DELHLTDK. Residues 254 to 274 traverse the membrane as a helical segment; sequence LTGEMIGIAAGLEIPMMLIAG. The Periplasmic segment spans residues 275–283; the sequence is YYMKRIGKR. A helical transmembrane segment spans residues 284–304; that stretch reads LLMLIAIVSGMCFYASVLMAT. The Cytoplasmic segment spans residues 305 to 310; it reads TPAVEL. A helical membrane pass occupies residues 311 to 331; the sequence is ELQILNAIFLGILCGIGMLYF. Residues 332 to 370 lie on the Periplasmic side of the membrane; it reads QDLMPEKIGSATTLYANTSRVGWIIAGSVDGIMVEIWSY. Residues 371–391 traverse the membrane as a helical segment; the sequence is HALFWLAIGMLGIAMICLLFI. Residues 392 to 394 are Cytoplasmic-facing; the sequence is KDI.

It belongs to the major facilitator superfamily. Set transporter family.

Its subcellular location is the cell inner membrane. In terms of biological role, involved in the efflux of sugars. The physiological role may be the detoxification of non-metabolizable sugar analogs. The protein is Sugar efflux transporter C (setC) of Escherichia coli (strain K12).